The primary structure comprises 267 residues: Undecaprenyl-diphosphatase (267 aa).

8 consecutive transmembrane segments (helical) span residues 1–21 (MTYF…FLPI), 39–59 (QGLA…VIYF), 83–103 (SNLA…GLLF), 111–131 (LRSA…LWWV), 149–169 (ALFL…RSGI), 189–209 (FLMS…KLAM), 218–238 (LLST…HFFL), and 246–266 (MMPF…WLAL).

It belongs to the UppP family.

The protein localises to the cell inner membrane. The catalysed reaction is di-trans,octa-cis-undecaprenyl diphosphate + H2O = di-trans,octa-cis-undecaprenyl phosphate + phosphate + H(+). Catalyzes the dephosphorylation of undecaprenyl diphosphate (UPP). Confers resistance to bacitracin. The protein is Undecaprenyl-diphosphatase of Aliivibrio fischeri (strain ATCC 700601 / ES114) (Vibrio fischeri).